The chain runs to 396 residues: GTPase Obg (396 aa).

The Obg domain maps to 1-159 (MKFVDEATIY…RNIRLELKVL (159 aa)). One can recognise an OBG-type G domain in the interval 160–333 (ADVGLLGLPN…LCQDIMTWIE (174 aa)). GTP is bound by residues 166-173 (GLPNAGKS), 191-195 (FTTLV), 213-216 (DIPG), 283-286 (NKTD), and 314-316 (SAL). Residues S173 and T193 each coordinate Mg(2+). Disordered regions lie at residues 337 to 356 (EEER…REQM) and 373 to 396 (LARK…FYAP). Residues 347-356 (EADRLNREQM) show a composition bias toward basic and acidic residues. A compositionally biased stretch (acidic residues) spans 381 to 396 (SDDDDDDEDVEVFYAP).

It belongs to the TRAFAC class OBG-HflX-like GTPase superfamily. OBG GTPase family. As to quaternary structure, monomer. It depends on Mg(2+) as a cofactor.

It localises to the cytoplasm. In terms of biological role, an essential GTPase which binds GTP, GDP and possibly (p)ppGpp with moderate affinity, with high nucleotide exchange rates and a fairly low GTP hydrolysis rate. Plays a role in control of the cell cycle, stress response, ribosome biogenesis and in those bacteria that undergo differentiation, in morphogenesis control. The chain is GTPase Obg from Hahella chejuensis (strain KCTC 2396).